Here is an 810-residue protein sequence, read N- to C-terminus: Eukaryotic translation initiation factor 3 subunit C (810 aa).

Positions 1 to 11 (MSRFFATNYNY) are enriched in polar residues. The segment at 1–98 (MSRFFATNYN…DSDESDEEDG (98 aa)) is disordered. Positions 12–33 (DETSSSSEEDLLSSSEELLSSS) are enriched in low complexity. Residues 34–58 (EEGELSDDSLFNDESESESDFDSDD) are compositionally biased toward acidic residues. The PCI domain maps to 605–780 (YHQHINLDLV…TYIVIEKGDE (176 aa)).

Belongs to the eIF-3 subunit C family. As to quaternary structure, component of the eukaryotic translation initiation factor 3 (eIF-3) complex.

It is found in the cytoplasm. Its function is as follows. Component of the eukaryotic translation initiation factor 3 (eIF-3) complex, which is involved in protein synthesis of a specialized repertoire of mRNAs and, together with other initiation factors, stimulates binding of mRNA and methionyl-tRNAi to the 40S ribosome. The eIF-3 complex specifically targets and initiates translation of a subset of mRNAs involved in cell proliferation. The polypeptide is Eukaryotic translation initiation factor 3 subunit C (Candida glabrata (strain ATCC 2001 / BCRC 20586 / JCM 3761 / NBRC 0622 / NRRL Y-65 / CBS 138) (Yeast)).